We begin with the raw amino-acid sequence, 636 residues long: Threonine--tRNA ligase (636 aa).

Positions 1–60 (MPIINFNNKEILFNYPISIIEIIKKFDKNLSENCIAAKINGKLLDVSEIINYDGSLELVK) constitute a TGS domain. A catalytic region spans residues 242 to 533 (DHRKIGKKLD…ITEEFSGKYP (292 aa)). Zn(2+)-binding residues include Cys333, His384, and His510.

It belongs to the class-II aminoacyl-tRNA synthetase family. In terms of assembly, homodimer. Requires Zn(2+) as cofactor.

It localises to the cytoplasm. The catalysed reaction is tRNA(Thr) + L-threonine + ATP = L-threonyl-tRNA(Thr) + AMP + diphosphate + H(+). In terms of biological role, catalyzes the attachment of threonine to tRNA(Thr) in a two-step reaction: L-threonine is first activated by ATP to form Thr-AMP and then transferred to the acceptor end of tRNA(Thr). Also edits incorrectly charged L-seryl-tRNA(Thr). The polypeptide is Threonine--tRNA ligase (Wigglesworthia glossinidia brevipalpis).